Here is a 421-residue protein sequence, read N- to C-terminus: MIPPPPNTSSLTCTPEEESENYKAVENMFATLYFFLPFSAFAALLANVIYLIVVTVGIRKGKLPLKRYALTINRTCADIFTILVGTYFYMKQKMDRCDSHICLPVETDMSRYVLQVVFVLNYWCVSLSYSGIAVLTNYAVRAPLQYKVNLTSMKVAKYILMGWIALLFCFLLCILLVHQGELDYNSNSVIHLFLDDFDSDEFIGEWLVDLCNHIKSHPGSRSLIVTILPPIVFYCISVVSYVFIIHLLFSRRKVSSYHRHWGSMLRLGIHLILFAGTCALTGTAYLGSFSIGDICENYKTNEPMCLDPVVLYMWNTAAALIGWICRMVIDATVDTFNDDVLRRTFFNSIRHRLLTGPTNTANDTKLILNQIEISCNKTSTGPSRKTESVQMESLMKIKPSRSRRLKINAQKSATIIEENIA.

This is an uncharacterized protein from Caenorhabditis elegans.